Here is a 587-residue protein sequence, read N- to C-terminus: Lipoprotein LpqB (587 aa).

The first 19 residues, 1–19 (MERLMRLTILLFLGAVLAG), serve as a signal peptide directing secretion. Cys20 carries N-palmitoyl cysteine lipidation. The S-diacylglycerol cysteine moiety is linked to residue Cys20.

The protein belongs to the LpqB lipoprotein family.

Its subcellular location is the cell membrane. The polypeptide is Lipoprotein LpqB (Mycobacterium bovis (strain ATCC BAA-935 / AF2122/97)).